We begin with the raw amino-acid sequence, 243 residues long: DNA repair protein RecO (243 aa).

The protein belongs to the RecO family.

In terms of biological role, involved in DNA repair and RecF pathway recombination. The polypeptide is DNA repair protein RecO (Bartonella quintana (strain Toulouse) (Rochalimaea quintana)).